Here is a 653-residue protein sequence, read N- to C-terminus: ATP-dependent zinc metalloprotease FtsH 1 (653 aa).

Over 1–8 the chain is Cytoplasmic; it reads MAENKWLR. A helical transmembrane segment spans residues 9–29; it reads NGFVWIVLIIAVVALWVTFMK. The Extracellular portion of the chain corresponds to 30–110; sequence DGGSAREENF…RVNPASQWGN (81 aa). A helical membrane pass occupies residues 111 to 131; it reads WLSALTFILPTLFLIGIVIFM. The Cytoplasmic segment spans residues 132–653; sequence MRQAQGTNNQ…SPTMRPQPAS (522 aa). 203–210 is a binding site for ATP; sequence GPPGTGKT. His425 is a Zn(2+) binding site. Glu426 is a catalytic residue. Residues His429 and Asp501 each contribute to the Zn(2+) site. A disordered region spans residues 604–653; that stretch reads EPRPRPQLVGPPVTRPAALAHKTEEADRGGERSPHPQPHPSPTMRPQPAS. Over residues 624–637 the composition is skewed to basic and acidic residues; sequence HKTEEADRGGERSP. Residues 638 to 653 are compositionally biased toward pro residues; sequence HPQPHPSPTMRPQPAS.

It in the central section; belongs to the AAA ATPase family. The protein in the C-terminal section; belongs to the peptidase M41 family. Homohexamer. Requires Zn(2+) as cofactor.

It localises to the cell membrane. In terms of biological role, acts as a processive, ATP-dependent zinc metallopeptidase for both cytoplasmic and membrane proteins. Plays a role in the quality control of integral membrane proteins. The polypeptide is ATP-dependent zinc metalloprotease FtsH 1 (Sphaerobacter thermophilus (strain ATCC 49802 / DSM 20745 / KCCM 41009 / NCIMB 13125 / S 6022)).